Here is a 60-residue protein sequence, read N- to C-terminus: Large ribosomal subunit protein bL32 (60 aa).

This sequence belongs to the bacterial ribosomal protein bL32 family.

The chain is Large ribosomal subunit protein bL32 (rpmF) from Borreliella burgdorferi (strain ATCC 35210 / DSM 4680 / CIP 102532 / B31) (Borrelia burgdorferi).